Here is a 255-residue protein sequence, read N- to C-terminus: 4-diphosphocytidyl-2-C-methyl-D-erythritol kinase (255 aa).

The active site involves lysine 6. 95–105 (PVCAGLGGGSS) is a binding site for ATP. Aspartate 137 is an active-site residue.

It belongs to the GHMP kinase family. IspE subfamily.

It catalyses the reaction 4-CDP-2-C-methyl-D-erythritol + ATP = 4-CDP-2-C-methyl-D-erythritol 2-phosphate + ADP + H(+). Its pathway is isoprenoid biosynthesis; isopentenyl diphosphate biosynthesis via DXP pathway; isopentenyl diphosphate from 1-deoxy-D-xylulose 5-phosphate: step 3/6. In terms of biological role, catalyzes the phosphorylation of the position 2 hydroxy group of 4-diphosphocytidyl-2C-methyl-D-erythritol. The chain is 4-diphosphocytidyl-2-C-methyl-D-erythritol kinase from Campylobacter jejuni subsp. doylei (strain ATCC BAA-1458 / RM4099 / 269.97).